The primary structure comprises 450 residues: 3-phosphoshikimate 1-carboxyvinyltransferase (450 aa).

3 residues coordinate 3-phosphoshikimate: K28, S29, and R33. K28 serves as a coordination point for phosphoenolpyruvate. Residues G100 and R128 each contribute to the phosphoenolpyruvate site. The 3-phosphoshikimate site is built by S173, Q175, D326, and K353. Position 175 (Q175) interacts with phosphoenolpyruvate. The active-site Proton acceptor is the D326. Residues R357 and R402 each contribute to the phosphoenolpyruvate site.

Belongs to the EPSP synthase family. Monomer.

The protein resides in the cytoplasm. It catalyses the reaction 3-phosphoshikimate + phosphoenolpyruvate = 5-O-(1-carboxyvinyl)-3-phosphoshikimate + phosphate. Its pathway is metabolic intermediate biosynthesis; chorismate biosynthesis; chorismate from D-erythrose 4-phosphate and phosphoenolpyruvate: step 6/7. Catalyzes the transfer of the enolpyruvyl moiety of phosphoenolpyruvate (PEP) to the 5-hydroxyl of shikimate-3-phosphate (S3P) to produce enolpyruvyl shikimate-3-phosphate and inorganic phosphate. The polypeptide is 3-phosphoshikimate 1-carboxyvinyltransferase (Brucella abortus (strain S19)).